Reading from the N-terminus, the 448-residue chain is Serine/threonine-protein phosphatase 2A regulatory subunit B'' subunit gamma (448 aa).

EF-hand domains lie at 268-303 (PSAL…TLTC) and 336-371 (KEPA…IQEQ). Aspartate 281, aspartate 283, asparagine 285, methionine 287, and glutamate 292 together coordinate Ca(2+).

It localises to the nucleus. The protein localises to the cytoplasm. Possible role in the regulation of cell death. In Xenopus tropicalis (Western clawed frog), this protein is Serine/threonine-protein phosphatase 2A regulatory subunit B'' subunit gamma (ppp2r3c).